The following is a 269-amino-acid chain: uncharacterized protein (269 aa).

The stretch at 52 to 262 forms a coiled coil; sequence KNVYEQLVAT…RKILVESINK (211 aa).

This is an uncharacterized protein from Caenorhabditis elegans.